The sequence spans 259 residues: tRNA-cytidine(32) 2-sulfurtransferase (259 aa).

Positions 40 to 45 (SGGKDS) match the PP-loop motif motif. [4Fe-4S] cluster contacts are provided by Cys114, Cys117, and Cys205.

The protein belongs to the TtcA family. In terms of assembly, homodimer. Requires Mg(2+) as cofactor. The cofactor is [4Fe-4S] cluster.

The protein resides in the cytoplasm. It catalyses the reaction cytidine(32) in tRNA + S-sulfanyl-L-cysteinyl-[cysteine desulfurase] + AH2 + ATP = 2-thiocytidine(32) in tRNA + L-cysteinyl-[cysteine desulfurase] + A + AMP + diphosphate + H(+). Its pathway is tRNA modification. Functionally, catalyzes the ATP-dependent 2-thiolation of cytidine in position 32 of tRNA, to form 2-thiocytidine (s(2)C32). The sulfur atoms are provided by the cysteine/cysteine desulfurase (IscS) system. This Bdellovibrio bacteriovorus (strain ATCC 15356 / DSM 50701 / NCIMB 9529 / HD100) protein is tRNA-cytidine(32) 2-sulfurtransferase.